The following is a 467-amino-acid chain: Putative gluconeogenesis factor (467 aa).

Pro residues predominate over residues 1–12 (MSAPPAPPPDRS). Residues 1–27 (MSAPPAPPPDRSAPPDRTDSAQTEPTR) form a disordered region.

It belongs to the gluconeogenesis factor family.

It localises to the cytoplasm. Its function is as follows. Required for morphogenesis under gluconeogenic growth conditions. The sequence is that of Putative gluconeogenesis factor from Deinococcus radiodurans (strain ATCC 13939 / DSM 20539 / JCM 16871 / CCUG 27074 / LMG 4051 / NBRC 15346 / NCIMB 9279 / VKM B-1422 / R1).